The primary structure comprises 821 residues: Serine/threonine-protein kinase CTR1 (821 aa).

Disordered stretches follow at residues 1 to 76 (MEMP…LNNQ) and 481 to 502 (NPGG…PSAN). Positions 14 to 25 (SQFSDDQVSVSV) are enriched in low complexity. Over residues 35–49 (SLSSENRSNHNSGNT) the composition is skewed to polar residues. Positions 551-809 (LNIKEKIGAG…TIMDLLRPLI (259 aa)) constitute a Protein kinase domain. ATP-binding positions include 557-565 (IGAGSFGTV) and lysine 578. Aspartate 676 functions as the Proton acceptor in the catalytic mechanism.

This sequence belongs to the protein kinase superfamily. TKL Ser/Thr protein kinase family. RAF subfamily. As to quaternary structure, interacts with EIN2 (via C-terminus). Expressed in both seedlings and adult plants.

The catalysed reaction is L-seryl-[protein] + ATP = O-phospho-L-seryl-[protein] + ADP + H(+). It catalyses the reaction L-threonyl-[protein] + ATP = O-phospho-L-threonyl-[protein] + ADP + H(+). Its activity is regulated as follows. Kinase activity is inhibited by C24:1-ceramide during hypoxia (e.g. submergences). Functionally, acts as a negative regulator in the ethylene response pathway. Phosphorylates the cytosolic C-terminal domain of EIN2, preventing the signaling in the absence of ethylene. Interacts with C24:1-ceramide upon hypoxic conditions (e.g. submergences) to in turn regulate EIN2 endoplasmic reticulum (ER)-to-nucleus translocation and EIN3 stabilization. The sequence is that of Serine/threonine-protein kinase CTR1 from Arabidopsis thaliana (Mouse-ear cress).